A 388-amino-acid polypeptide reads, in one-letter code: Succinate--CoA ligase [ADP-forming] subunit beta (388 aa).

Positions 9 to 244 constitute an ATP-grasp domain; that stretch reads KEIFRSMGVA…LEEEDPKEIE (236 aa). Residues K46, 53-55, E99, C102, and E107 each bind ATP; that span reads GRG. Mg(2+) contacts are provided by N199 and D213. Residues N264 and 321-323 contribute to the substrate site; that span reads GIM.

Belongs to the succinate/malate CoA ligase beta subunit family. Heterotetramer of two alpha and two beta subunits. Mg(2+) is required as a cofactor.

It carries out the reaction succinate + ATP + CoA = succinyl-CoA + ADP + phosphate. It catalyses the reaction GTP + succinate + CoA = succinyl-CoA + GDP + phosphate. It functions in the pathway carbohydrate metabolism; tricarboxylic acid cycle; succinate from succinyl-CoA (ligase route): step 1/1. Succinyl-CoA synthetase functions in the citric acid cycle (TCA), coupling the hydrolysis of succinyl-CoA to the synthesis of either ATP or GTP and thus represents the only step of substrate-level phosphorylation in the TCA. The beta subunit provides nucleotide specificity of the enzyme and binds the substrate succinate, while the binding sites for coenzyme A and phosphate are found in the alpha subunit. This chain is Succinate--CoA ligase [ADP-forming] subunit beta, found in Staphylococcus aureus (strain Mu3 / ATCC 700698).